The chain runs to 269 residues: MGQEDMMSAAEDLADQFLRVTKQYLPHMARLCLISTFLEDGIRMWFQWSEQRDYIEATWSCGYFLATCFVIINLIGQIGGCVLVLSRNLVQYACFGLFCIIALQTVAYSILWDLKFLMRNLALGGGLLLLLAESRSEGKSMFAGVPSMGESSPKQYMQLGGRVLLVLMFMTLLHFDSDFFSILQNMVGTALIILVAVGFKTKLAALTLVVWLLAINVYFNAFWTVPAYKPMHDFLKYDFFQTTSVIGGLLLVVALGPGGVSMDEKKKEW.

5 helical membrane passes run 64-84 (FLATCFVIINLIGQIGGCVLV), 92-112 (YACFGLFCIIALQTVAYSILW), 179-199 (FFSILQNMVGTALIILVAVGF), 203-223 (LAALTLVVWLLAINVYFNAFW), and 242-262 (TTSVIGGLLLVVALGPGGVSM). Positions 266–269 (KKEW) match the Di-lysine motif motif.

The protein belongs to the SURF4 family.

The protein localises to the endoplasmic reticulum membrane. The protein resides in the endoplasmic reticulum-Golgi intermediate compartment membrane. It localises to the golgi apparatus membrane. Endoplasmic reticulum cargo receptor that mediates the export of lipoproteins by recruiting cargos into COPII vesicles to facilitate their secretion. The protein is Surfeit locus protein 4 of Danio rerio (Zebrafish).